Here is a 162-residue protein sequence, read N- to C-terminus: Transcription elongation factor GreA (162 aa).

Residues 1 to 28 are a coiled coil; it reads MQKEPMLEETYRKLSEELEQLKSVERGV.

It belongs to the GreA/GreB family.

Its function is as follows. Necessary for efficient RNA polymerase transcription elongation past template-encoded arresting sites. The arresting sites in DNA have the property of trapping a certain fraction of elongating RNA polymerases that pass through, resulting in locked ternary complexes. Cleavage of the nascent transcript by cleavage factors such as GreA or GreB allows the resumption of elongation from the new 3'terminus. GreA releases sequences of 2 to 3 nucleotides. This chain is Transcription elongation factor GreA, found in Sulfurovum sp. (strain NBC37-1).